A 332-amino-acid polypeptide reads, in one-letter code: Glyceraldehyde-3-phosphate dehydrogenase 2 (332 aa).

Residues Arg11, Ile12, and Asp33 each contribute to the NAD(+) site. Glycyl lysine isopeptide (Lys-Gly) (interchain with G-Cter in ubiquitin) cross-links involve residues Lys46 and Lys63. Thr120 provides a ligand contact to NAD(+). D-glyceraldehyde 3-phosphate-binding positions include 149 to 151 (SCT), Thr180, 209 to 210 (TG), and Arg232. Cys150 serves as the catalytic Nucleophile. Residue Ser302 is modified to Phosphoserine. 2 residues coordinate NAD(+): Asn314 and Tyr318.

This sequence belongs to the glyceraldehyde-3-phosphate dehydrogenase family. In terms of assembly, homotetramer.

It localises to the cytoplasm. It carries out the reaction D-glyceraldehyde 3-phosphate + phosphate + NAD(+) = (2R)-3-phospho-glyceroyl phosphate + NADH + H(+). It catalyses the reaction NADH + H2O = (6R)-NADHX. The catalysed reaction is NADH + H2O = (6S)-NADHX. The enzyme catalyses NADPH + H2O = (6R)-NADPHX. It carries out the reaction NADPH + H2O = (6S)-NADPHX. Its pathway is carbohydrate degradation; glycolysis; pyruvate from D-glyceraldehyde 3-phosphate: step 1/5. Glyceraldehyde-3-phosphate dehydrogenase (GAPDH) involved in glycolysis and gluconeogenesis. Catalyzes the reaction of glyceraldehyde-3-phosphate to 1,3 bis-phosphoglycerate. The contribution of the TDH1, TDH2, and TDH3 to the total glyceraldehyde-3-phosphate dehydrogenase activity is 10-15, 25-30, and 50-60%, respectively. Its function is as follows. As a side activity, catalyzes the hydration of the nicotinamide ring of NADH or NADPH at the C6 position to give the corresponding hydrates, NADHX and NADPHX, which exist as R and S epimers, that cannot act as electron donors or acceptors and inhibit several dehydrogenases, making them toxic. This chain is Glyceraldehyde-3-phosphate dehydrogenase 2, found in Saccharomyces cerevisiae (strain ATCC 204508 / S288c) (Baker's yeast).